Reading from the N-terminus, the 153-residue chain is Histone H2B.3 (153 aa).

Composition is skewed to basic and acidic residues over residues Met1–Leu28 and Glu36–Lys53. The disordered stretch occupies residues Met1–Lys61. 2 positions are modified to N6-acetyllysine: Lys7 and Lys37. Lys149 participates in a covalent cross-link: Glycyl lysine isopeptide (Lys-Gly) (interchain with G-Cter in ubiquitin).

This sequence belongs to the histone H2B family. In terms of assembly, the nucleosome is a histone octamer containing two molecules each of H2A, H2B, H3 and H4 assembled in one H3-H4 heterotetramer and two H2A-H2B heterodimers. The octamer wraps approximately 147 bp of DNA. Post-translationally, can be acetylated to form H2BK6ac and H2BK33ac. Monoubiquitinated by BRE1 to form H2BK143ub1 and deubiquitinated by UBP26. Required for heterochromatic histone H3 di- and trimethylation at H3K4me. May give a specific tag for epigenetic transcriptional activation.

Its subcellular location is the nucleus. The protein localises to the chromosome. Its function is as follows. Core component of nucleosome. Nucleosomes wrap and compact DNA into chromatin, limiting DNA accessibility to the cellular machineries which require DNA as a template. Histones thereby play a central role in transcription regulation, DNA repair, DNA replication and chromosomal stability. DNA accessibility is regulated via a complex set of post-translational modifications of histones, also called histone code, and nucleosome remodeling. The protein is Histone H2B.3 (H2B.3) of Oryza sativa subsp. indica (Rice).